The chain runs to 209 residues: Thymidylate kinase (209 aa).

13–20 (GLEGAGKS) provides a ligand contact to ATP.

It belongs to the thymidylate kinase family.

It carries out the reaction dTMP + ATP = dTDP + ADP. Functionally, phosphorylation of dTMP to form dTDP in both de novo and salvage pathways of dTTP synthesis. In Shewanella sp. (strain MR-4), this protein is Thymidylate kinase.